A 318-amino-acid polypeptide reads, in one-letter code: Aspartate carbamoyltransferase catalytic subunit (318 aa).

Positions 58 and 59 each coordinate carbamoyl phosphate. Lys86 contacts L-aspartate. Residues Arg108, His141, and Gln144 each coordinate carbamoyl phosphate. 2 residues coordinate L-aspartate: Arg174 and Arg226. Carbamoyl phosphate-binding residues include Gly270 and Pro271.

The protein belongs to the aspartate/ornithine carbamoyltransferase superfamily. ATCase family. As to quaternary structure, heterododecamer (2C3:3R2) of six catalytic PyrB chains organized as two trimers (C3), and six regulatory PyrI chains organized as three dimers (R2).

It carries out the reaction carbamoyl phosphate + L-aspartate = N-carbamoyl-L-aspartate + phosphate + H(+). Its pathway is pyrimidine metabolism; UMP biosynthesis via de novo pathway; (S)-dihydroorotate from bicarbonate: step 2/3. Functionally, catalyzes the condensation of carbamoyl phosphate and aspartate to form carbamoyl aspartate and inorganic phosphate, the committed step in the de novo pyrimidine nucleotide biosynthesis pathway. The sequence is that of Aspartate carbamoyltransferase catalytic subunit from Lactobacillus helveticus (strain DPC 4571).